The chain runs to 267 residues: MMNHKKGISVKINTKELVLKISLPALAVVIWELLAIYINNPVILPRVEAVINVLIHPFQGILGTGSLIDNTIISIKRVISGFLLASAVAIPLGILMGYYRTVNSLCDTLIELLRPIPPLAWVPLSLAWFGLGEMSMIFIIFIGAFFPILINTISGVKGVPTPLIEAALTLGAKGRDILIKVVIPASSPSILTGLRVGAGIAWMCVVAAEMLPSSNAGLGYLIMYAYSLSRMDVVIACMIIIGLIGLVLDRGLRYIEDKYFVWRKMMK.

Transmembrane regions (helical) follow at residues 18–38, 48–68, 78–98, 115–135, 136–156, 188–208, and 228–248; these read VLKI…AIYI, EAVI…GSLI, VISG…LMGY, PIPP…GEMS, MIFI…ISGV, PSIL…VVAA, and LSRM…GLVL. Residues 71 to 252 form the ABC transmembrane type-1 domain; sequence TIISIKRVIS…LIGLVLDRGL (182 aa).

This sequence belongs to the binding-protein-dependent transport system permease family. CysTW subfamily.

It is found in the cell membrane. In terms of biological role, probably part of a binding-protein-dependent transport system. Probably responsible for the translocation of the substrate across the membrane. In Methanocaldococcus jannaschii (strain ATCC 43067 / DSM 2661 / JAL-1 / JCM 10045 / NBRC 100440) (Methanococcus jannaschii), this protein is Putative ABC transporter permease protein MJ0413.